The chain runs to 125 residues: Basic leucine zipper transcriptional factor ATF-like (125 aa).

The segment covering 1-14 has biased composition (low complexity); it reads MPHSSDSSDSSFSR. The interval 1–59 is disordered; that stretch reads MPHSSDSSDSSFSRSPPPGKQDSSDDVRKVQRREKNRIAAQKSRQRQTQKADTLHLESE. In terms of domain architecture, bZIP spans 26 to 89; that stretch reads DVRKVQRREK…KYFTSVLSSH (64 aa). The segment at 28–50 is basic motif; that stretch reads RKVQRREKNRIAAQKSRQRQTQK. Serine 43 is modified (phosphoserine). Position 48 is a phosphothreonine (threonine 48). Residues 54-75 form a leucine-zipper region; that stretch reads LHLESEDLEKQNAALRKEIKQL.

This sequence belongs to the bZIP family. In terms of assembly, heterodimer; mainly heterodimerizes with JUNB. The BATF-JUNB heterodimer interacts with IRF4 and IRF8. Interacts (via bZIP domain) with IRF4 and IRF8; the interaction is direct. Also forms heterodimers with JUN and JUND. Interacts with IFI35. In terms of processing, phosphorylated on serine and threonine residues and at least one tyrosine residue. Phosphorylation at Ser-43 inhibit DNA binding activity and transforms it as a negative regulator of AP-1 mediated transcription. Detected in postnatal and adult lymphoid tissues such as thymus, spleen and lymph nodes. In thymus most concentrated expression is found in the immediate cortical layer. Differentially expressed during T-cell development in thymus. Highly expressed in Th17, Th1 and Th2 cells and in activated B-cells.

The protein resides in the nucleus. It localises to the cytoplasm. Its function is as follows. AP-1 family transcription factor that controls the differentiation of lineage-specific cells in the immune system: specifically mediates the differentiation of T-helper 17 cells (Th17), follicular T-helper cells (TfH), CD8(+) dendritic cells and class-switch recombination (CSR) in B-cells. Acts via the formation of a heterodimer with JUNB that recognizes and binds DNA sequence 5'-TGA[CG]TCA-3'. The BATF-JUNB heterodimer also forms a complex with IRF4 (or IRF8) in immune cells, leading to recognition of AICE sequence (5'-TGAnTCA/GAAA-3'), an immune-specific regulatory element, followed by cooperative binding of BATF and IRF4 (or IRF8) and activation of genes. Controls differentiation of T-helper cells producing interleukin-17 (Th17 cells) by binding to Th17-associated gene promoters: regulates expression of the transcription factor RORC itself and RORC target genes such as IL17 (IL17A or IL17B). Also involved in differentiation of follicular T-helper cells (TfH) by directing expression of BCL6 and MAF. In B-cells, involved in class-switch recombination (CSR) by controlling the expression of both AICDA and of germline transcripts of the intervening heavy-chain region and constant heavy-chain region (I(H)-C(H)). Following infection, can participate in CD8(+) dendritic cell differentiation via interaction with IRF4 and IRF8 to mediate cooperative gene activation. Regulates effector CD8(+) T-cell differentiation by regulating expression of SIRT1. Following DNA damage, part of a differentiation checkpoint that limits self-renewal of hematopoietic stem cells (HSCs): up-regulated by STAT3, leading to differentiation of HSCs, thereby restricting self-renewal of HSCs. The chain is Basic leucine zipper transcriptional factor ATF-like (Batf) from Mus musculus (Mouse).